The following is a 547-amino-acid chain: Smu-2 suppressor of mec-8 and unc-52 protein (547 aa).

5 disordered regions span residues 18 to 125, 164 to 202, 288 to 459, 496 to 515, and 524 to 547; these read TSAR…AQDQ, IDKSDDDDDDDIDTAFDEKVTSSSSSSKPSEASLLAQEL, AEPK…AGPK, NGEGGRKNKKQSAVSDAKRL, and KIMDKRKAGGDGAGGGGDYKKPKY. Over residues 34-44 the composition is skewed to basic and acidic residues; that stretch reads ADPKTGDDKPA. Residues 45 to 58 are compositionally biased toward basic residues; it reads SFKHKHLKPAKFKK. The stretch at 66–94 forms a coiled coil; the sequence is KAKKEKTEADEDEAALKNILKNYRDRAAE. The segment covering 87-106 has biased composition (basic and acidic residues); that stretch reads NYRDRAAERRKQGDEKEDPS. The required and sufficient for interaction with smu-1 stretch occupies residues 163–223; that stretch reads EIDKSDDDDD…SLHRVLFKNE (61 aa). Acidic residues predominate over residues 166–178; sequence KSDDDDDDDIDTA. 2 stretches are compositionally biased toward low complexity: residues 185–196 and 307–317; these read SSSSSSKPSEAS and APGAAAAAPGA. The span at 330-423 shows a compositional bias: basic and acidic residues; it reads VPSRKSRDSR…EREKKRKELE (94 aa). 12 tandem repeats follow at residues 336–337, 339–340, 348–349, 350–351, 352–353, 354–355, 356–357, 358–359, 360–361, 362–363, 364–365, and 367–368. The segment at 336–368 is 12 X 2 AA repeats of R-[DS]; the sequence is RDSRDAGRRGSRRDRSRDRSRDRDRDRDRDNRD. Residues 371 to 427 are a coiled coil; sequence FEKSANSRREEEQNRREQQRERERAEQERRREREKEREQEKAKEREKKRKELEESSG.

The protein belongs to the RED family. Probable component of the spliceosome. Heterotetramer with smu-1. The smu-1 homodimer interacts (via the N-terminal region including the LisH and CTLH domains) with smu-2, giving rise to a heterotetramer. Ubiquitous.

Its subcellular location is the nucleus. Its function is as follows. Auxiliary spliceosomal protein that regulates selection of alternative splice sites in a small set of target pre-mRNA species. Selectively regulates alternative splicing of unc-52 exon 17. Thus, smu-2 mutants selectively suppress the effects of unc-52 nonsense mutations in exon 17 by promoting the accumulation of unc-52 isoforms that lack exon 17. In contrast, smu-2 mutants do not suppress the effects of an unc-52 mutation that affects the 5' splice site of exon 16. Required for normal accumulation of smu-1. This chain is Smu-2 suppressor of mec-8 and unc-52 protein, found in Caenorhabditis elegans.